Reading from the N-terminus, the 384-residue chain is Thylakoid membrane protein TERC, chloroplastic (384 aa).

Residues 1–48 (MSLASVIHHGILPPAKSDRIFLTIPVFPPDFRARGWTKSPFSLLINPS) constitute a chloroplast transit peptide. The Stromal segment spans residues 49–115 (LASAANRRLS…DYQQEETYKT (67 aa)). The disordered stretch occupies residues 68–104 (GIDQEDEEKESRELLPHKNDENATTSRSSSSVDSGGL). Residues 76–88 (KESRELLPHKNDE) show a composition bias toward basic and acidic residues. Residues 116-136 (SFKTVALCVGTAVAFGIGIGL) form a helical membrane-spanning segment. The Lumenal, thylakoid portion of the chain corresponds to 137 to 145 (KEGVGKASE). Residues 146 to 166 (FFAGYILEQSLSVDNLFVFVL) form a helical membrane-spanning segment. Residues 167–180 (VFKYFKVPLMYQNK) lie on the Stromal side of the membrane. The chain crosses the membrane as a helical span at residues 181 to 201 (VLTYGIAGAIVFRFTLILLGT). The Lumenal, thylakoid segment spans residues 202–206 (ATLQK). The helical transmembrane segment at 207-227 (FEAVNLLLAAVLLYSSFKLFA) threads the bilayer. At 228–275 (SEEDDTDLSDNFIVKTCQRFIPVTSSYDGNRFFTKHDGILKATPLLLT) the chain is on the stromal side. Residues 276-296 (VAVIELSDIAFAVDSIPAVFG) form a helical membrane-spanning segment. At 297–301 (VTRDP) the chain is on the lumenal, thylakoid side. The helical transmembrane segment at 302–322 (FIVLTSNLFAILGLRSLYTLI) threads the bilayer. The Stromal portion of the chain corresponds to 323–335 (SEGMDELEYLQPS). The chain crosses the membrane as a helical span at residues 336-356 (IAVVLGFIGVKMILDFFGFHI). Ser357 is a topological domain (lumenal, thylakoid). A helical transmembrane segment spans residues 358-378 (TEASLGVVALSLSTGVLLSLT). At 379–384 (NKSSDS) the chain is on the stromal side.

As to quaternary structure, interacts with ALB3. Expressed in roots, rosette and cauline leaves, stems and flowers.

It is found in the plastid. The protein resides in the chloroplast thylakoid membrane. Integral thylakoid membrane protein that plays a crucial role in thylakoid membrane biogenesis and thylakoid formation in early chloroplast development. Is essential for de novo synthesis of photosystem II (PSII) core proteins and required for efficient insertion of thylakoid membrane proteins, presumably via interaction with ALB3. May assist synthesis of thylakoid membrane proteins at the membrane insertion step. The chain is Thylakoid membrane protein TERC, chloroplastic from Arabidopsis thaliana (Mouse-ear cress).